The primary structure comprises 748 residues: Catalase-peroxidase (748 aa).

The segment at residues 91–242 is a cross-link (tryptophyl-tyrosyl-methioninium (Trp-Tyr) (with M-268)); it reads WHSAGTYRIG…LAAVQMGLIY (152 aa). His92 acts as the Proton acceptor in catalysis. A disordered region spans residues 194 to 223; sequence DRYGKGKGSSSQGEIPADAHRHGQEQARTA. The segment at residues 242 to 268 is a cross-link (tryptophyl-tyrosyl-methioninium (Tyr-Met) (with W-91)); sequence YVNPEGPEGNPDPLAAAHDIRETFARM. His283 lines the heme b pocket. Positions 288–310 are disordered; sequence THGAGDAKHVGREPEGEDMDSQG. A compositionally biased stretch (basic and acidic residues) spans 290–301; that stretch reads GAGDAKHVGREP.

The protein belongs to the peroxidase family. Peroxidase/catalase subfamily. Homodimer or homotetramer. Requires heme b as cofactor. Formation of the three residue Trp-Tyr-Met cross-link is important for the catalase, but not the peroxidase activity of the enzyme.

It catalyses the reaction H2O2 + AH2 = A + 2 H2O. The enzyme catalyses 2 H2O2 = O2 + 2 H2O. Its function is as follows. Bifunctional enzyme with both catalase and broad-spectrum peroxidase activity. In Herbaspirillum seropedicae, this protein is Catalase-peroxidase.